We begin with the raw amino-acid sequence, 317 residues long: Ribosomal protein L11 methyltransferase (317 aa).

Positions 158, 179, 201, and 244 each coordinate S-adenosyl-L-methionine.

Belongs to the methyltransferase superfamily. PrmA family.

It localises to the cytoplasm. It carries out the reaction L-lysyl-[protein] + 3 S-adenosyl-L-methionine = N(6),N(6),N(6)-trimethyl-L-lysyl-[protein] + 3 S-adenosyl-L-homocysteine + 3 H(+). Functionally, methylates ribosomal protein L11. The chain is Ribosomal protein L11 methyltransferase from Streptococcus pyogenes serotype M1.